The chain runs to 626 residues: Glucoamylase (626 aa).

An N-terminal signal peptide occupies residues 1–19; the sequence is MHLVSSLLVVGAAFQAVLG. The propeptide occupies 20–35; the sequence is LPDPLHEKRHSDIIKR. Asn106 carries an N-linked (GlcNAc...) asparagine glycan. Trp155 is a substrate binding site. Asn206 is a glycosylation site (N-linked (GlcNAc...) asparagine). Asp211 acts as the Proton acceptor in catalysis. The active-site Proton donor is the Glu214. N-linked (GlcNAc...) asparagine glycosylation is present at Asn217. One can recognise a CBM20 domain in the interval 520–626; the sequence is CAADHEVLVT…STATLDDTWR (107 aa).

This sequence belongs to the glycosyl hydrolase 15 family.

It catalyses the reaction Hydrolysis of terminal (1-&gt;4)-linked alpha-D-glucose residues successively from non-reducing ends of the chains with release of beta-D-glucose.. This Neurospora crassa (strain ATCC 24698 / 74-OR23-1A / CBS 708.71 / DSM 1257 / FGSC 987) protein is Glucoamylase (gla-1).